The chain runs to 199 residues: FMN-dependent NADH:quinone oxidoreductase 2 (199 aa).

FMN contacts are provided by residues Ser-10, 17–19 (SDS), and 135–138 (TKGG).

The protein belongs to the azoreductase type 1 family. Homodimer. The cofactor is FMN.

The enzyme catalyses 2 a quinone + NADH + H(+) = 2 a 1,4-benzosemiquinone + NAD(+). It carries out the reaction N,N-dimethyl-1,4-phenylenediamine + anthranilate + 2 NAD(+) = 2-(4-dimethylaminophenyl)diazenylbenzoate + 2 NADH + 2 H(+). In terms of biological role, quinone reductase that provides resistance to thiol-specific stress caused by electrophilic quinones. Functionally, also exhibits azoreductase activity. Catalyzes the reductive cleavage of the azo bond in aromatic azo compounds to the corresponding amines. The chain is FMN-dependent NADH:quinone oxidoreductase 2 from Mesoplasma florum (strain ATCC 33453 / NBRC 100688 / NCTC 11704 / L1) (Acholeplasma florum).